A 489-amino-acid chain; its full sequence is Putative BTB/POZ domain-containing protein R773 (489 aa).

In terms of domain architecture, BTB spans 3–73; sequence SNIELVITDE…GNTSYKFQDK (71 aa).

The protein belongs to the mimivirus BTB/WD family.

The sequence is that of Putative BTB/POZ domain-containing protein R773 from Acanthamoeba polyphaga (Amoeba).